We begin with the raw amino-acid sequence, 660 residues long: Acetyl-coenzyme A synthetase (660 aa).

CoA-binding positions include 197 to 200 (RGGK) and threonine 317. ATP-binding positions include 397–399 (GEP), 421–426 (DTFWQT), aspartate 512, and arginine 528. Serine 536 is a binding site for CoA. An ATP-binding site is contributed by arginine 539. The Mg(2+) site is built by valine 550 and valine 555. Residue lysine 625 is modified to N6-acetyllysine.

It belongs to the ATP-dependent AMP-binding enzyme family. Requires Mg(2+) as cofactor. In terms of processing, acetylated. Deacetylation by the SIR2-homolog deacetylase activates the enzyme.

It catalyses the reaction acetate + ATP + CoA = acetyl-CoA + AMP + diphosphate. It participates in ketone degradation; acetoin degradation. Catalyzes the conversion of acetate into acetyl-CoA (AcCoA), an essential intermediate at the junction of anabolic and catabolic pathways. AcsA undergoes a two-step reaction. In the first half reaction, AcsA combines acetate with ATP to form acetyl-adenylate (AcAMP) intermediate. In the second half reaction, it can then transfer the acetyl group from AcAMP to the sulfhydryl group of CoA, forming the product AcCoA. Although acetate is the preferred substrate of AcsA, propionate is also used, but at a diminished rate compared with that of acetate. Fatty acids with more than three carbon atoms are usually not accepted as substrates by AcsA. The sequence is that of Acetyl-coenzyme A synthetase from Cupriavidus necator (strain ATCC 17699 / DSM 428 / KCTC 22496 / NCIMB 10442 / H16 / Stanier 337) (Ralstonia eutropha).